The primary structure comprises 248 residues: Probable transcriptional regulator LumQ (248 aa).

Residues 148–246 (VLIDNYIEQH…GMSPTRYQFF (99 aa)) enclose the HTH araC/xylS-type domain. 2 DNA-binding regions (H-T-H motif) span residues 165-186 (AELS…KSQM) and 213-236 (LSQV…RRLY).

Functionally, probable transcriptional regulator. Its target gene(s) is not yet known. The chain is Probable transcriptional regulator LumQ (lumQ) from Photobacterium leiognathi.